Consider the following 394-residue polypeptide: Na(+)/H(+) antiporter NhaA (394 aa).

The next 11 membrane-spanning stretches (helical) occupy residues 14–34 (AGGLILIIAAAIALLMANSAL), 59–79 (LLLWINDGLMAVFFLMVGLEV), 95–115 (VFPAIAALGGMLAPALIYLLF), 125–145 (GWAIPAATDIAFALGVMALLG), 154–174 (VFLLALAIIDDLGVIIIIALF), 179–199 (VSLQSLGIAAAAIALLAYMNW), 213–233 (LVLWVCILKSGVHATLAGVIV), 254–274 (GLHPWVAYLILPLFAFANAGV), 292–312 (IATGLFIGKPLGIFTFSWLAV), 328–348 (IFAVSVLCGIGFTMSIFIASL), and 363–383 (LGILLGSTTAAVVGYSLLRLV).

The protein belongs to the NhaA Na(+)/H(+) (TC 2.A.33) antiporter family.

The protein localises to the cell inner membrane. The catalysed reaction is Na(+)(in) + 2 H(+)(out) = Na(+)(out) + 2 H(+)(in). Functionally, na(+)/H(+) antiporter that extrudes sodium in exchange for external protons. The chain is Na(+)/H(+) antiporter NhaA from Yersinia pseudotuberculosis serotype IB (strain PB1/+).